The primary structure comprises 386 residues: Succinate--CoA ligase [ADP-forming] subunit beta (386 aa).

The 236-residue stretch at Lys-9–Glu-244 folds into the ATP-grasp domain. Residues Lys-46, Gly-53–Gly-55, Glu-99, Cys-102, and Glu-107 contribute to the ATP site. Residues Asn-199 and Asp-213 each contribute to the Mg(2+) site. Residues Asn-264 and Gly-321–Met-323 contribute to the substrate site.

It belongs to the succinate/malate CoA ligase beta subunit family. In terms of assembly, heterotetramer of two alpha and two beta subunits. The cofactor is Mg(2+).

The catalysed reaction is succinate + ATP + CoA = succinyl-CoA + ADP + phosphate. It carries out the reaction GTP + succinate + CoA = succinyl-CoA + GDP + phosphate. It participates in carbohydrate metabolism; tricarboxylic acid cycle; succinate from succinyl-CoA (ligase route): step 1/1. In terms of biological role, succinyl-CoA synthetase functions in the citric acid cycle (TCA), coupling the hydrolysis of succinyl-CoA to the synthesis of either ATP or GTP and thus represents the only step of substrate-level phosphorylation in the TCA. The beta subunit provides nucleotide specificity of the enzyme and binds the substrate succinate, while the binding sites for coenzyme A and phosphate are found in the alpha subunit. The sequence is that of Succinate--CoA ligase [ADP-forming] subunit beta from Bacillus mycoides (strain KBAB4) (Bacillus weihenstephanensis).